Reading from the N-terminus, the 637-residue chain is Sterol 3-beta-glucosyltransferase UGT80A2 (637 aa).

Disordered stretches follow at residues 1–29 (MPEI…RASV) and 66–112 (VAES…TERQ). Residues 13–24 (SSSSSSSSSSSS) show a composition bias toward low complexity. Polar residues predominate over residues 67–79 (AESSGTGNKSFSR). Basic and acidic residues predominate over residues 103 to 112 (RLDKSKTERQ).

It belongs to the glycosyltransferase 28 family. Expressed in roots, cauline leaf epidermal cells, stomata, stamen, pollen and around the base of siliques.

It carries out the reaction a sterol + UDP-alpha-D-glucose = a sterol 3-beta-D-glucoside + UDP + H(+). In terms of biological role, involved in the biosynthesis of sterol glucosides. Catalyzes the synthesis of steryl glycosides (SGs) and acyl steryl glycosides (ASGs) which are the most abundant sterol derivatives in higher plants. Can act on several sterols like sitosterol, campesterol and stigmasterol. Both UGT80A2 and UGT80B1 are required for the normal production of SGs and ASGs in seeds. In Arabidopsis thaliana (Mouse-ear cress), this protein is Sterol 3-beta-glucosyltransferase UGT80A2 (UGT80A2).